The following is a 593-amino-acid chain: Epidermal growth factor receptor kinase substrate 8-like protein 3 (593 aa).

The region spanning 28–155 is the PTB domain; the sequence is QHRVEHLMTC…ALEEELEQRP (128 aa). Disordered stretches follow at residues 149–171, 184–239, and 374–451; these read EELE…RGPA, LEPG…ERDE, and ADWT…PAQP. The residue at position 231 (Ser231) is a Phosphoserine. Residues 386 to 401 are compositionally biased toward polar residues; sequence PTFSDDWQLPEPSSQA. Residues 425 to 435 show a composition bias toward basic and acidic residues; it reads PQEKTHNHDPQ. Residues 450 to 509 enclose the SH3 domain; the sequence is QPALKMQVLYEFEARNPRELTVVQGEKLEVLDHSKRWWLVKNEAGRSGYIPSNILEPLQP.

It belongs to the EPS8 family. In terms of assembly, interacts with ABI1. Part of a complex that contains SOS1, ABI1 and EPS8L2. Interacts with FASLG.

The protein localises to the cytoplasm. The polypeptide is Epidermal growth factor receptor kinase substrate 8-like protein 3 (EPS8L3) (Homo sapiens (Human)).